Consider the following 637-residue polypeptide: Early transcription factor 70 kDa subunit (637 aa).

Positions 32 to 185 constitute a Helicase ATP-binding domain; that stretch reads RTIIDENRSV…GHIIDLMSEE (154 aa). 45–52 is an ATP binding site; that stretch reads HIMGSGKT. A DEXH box motif is present at residues 135–138; it reads DKAH. The region spanning 327–507 is the Helicase C-terminal domain; it reads KFKYFINRIQ…VLPFDIKKLL (181 aa).

The protein belongs to the helicase family. VETF subfamily. As to quaternary structure, heterodimer of a 70 kDa and a 82 kDa subunit. Part of the early transcription complex composed of ETF, RAP94/OPG109, and the DNA-directed RNA polymerase.

Its subcellular location is the virion. Its function is as follows. Acts with RNA polymerase to initiate transcription from early gene promoters. Is recruited by the RPO-associated protein of 94 kDa RAP94/OPG109 to form the early transcription complex, which also contains the core RNA polymerase. ETF heterodimer binds to early gene promoters. This Homo sapiens (Human) protein is Early transcription factor 70 kDa subunit (OPG118).